Here is a 255-residue protein sequence, read N- to C-terminus: ParA family protein TC_0871 (255 aa).

It belongs to the ParA family.

This chain is ParA family protein TC_0871, found in Chlamydia muridarum (strain MoPn / Nigg).